Here is a 484-residue protein sequence, read N- to C-terminus: Toluene efflux pump outer membrane protein TtgC (484 aa).

The signal sequence occupies residues 1–17; it reads MTKSLLSLAVTAFILGG. Cys18 carries N-palmitoyl cysteine lipidation. Cys18 carries the S-diacylglycerol cysteine lipid modification.

Belongs to the outer membrane factor (OMF) (TC 1.B.17) family.

The protein localises to the cell outer membrane. The outer membrane component of a constitutive organic solvent efflux system. Is involved in export of toluene, styrene, m-xylene, propylbenzene and ethylbenzene. Also exports AMP and the antibiotics carbenicillin, nalidixic acid, chloramphenicol and tetracycline. In Pseudomonas putida (strain DOT-T1E), this protein is Toluene efflux pump outer membrane protein TtgC (ttgC).